Consider the following 353-residue polypeptide: Photosystem II D2 protein (353 aa).

The residue at position 2 (threonine 2) is an N-acetylthreonine. Phosphothreonine is present on threonine 2. The chain crosses the membrane as a helical span at residues 41-61; that stretch reads CAYFALGGWFTGTTFVTSWYT. Histidine 118 provides a ligand contact to chlorophyll a. A helical transmembrane segment spans residues 125–141; it reads GFMLRQFELARSVQLRP. 2 residues coordinate pheophytin a: glutamine 130 and asparagine 143. The chain crosses the membrane as a helical span at residues 153–166; it reads VFVSVFLIYPLGQS. Histidine 198 serves as a coordination point for chlorophyll a. The chain crosses the membrane as a helical span at residues 208–228; it reads AALLCAIHGATVENTLFEDGD. A plastoquinone-binding residues include histidine 215 and phenylalanine 262. Histidine 215 is a binding site for Fe cation. A Fe cation-binding site is contributed by histidine 269. A helical membrane pass occupies residues 279 to 295; sequence GLWMSALGVVGLALNLR.

This sequence belongs to the reaction center PufL/M/PsbA/D family. As to quaternary structure, PSII is composed of 1 copy each of membrane proteins PsbA, PsbB, PsbC, PsbD, PsbE, PsbF, PsbH, PsbI, PsbJ, PsbK, PsbL, PsbM, PsbT, PsbX, PsbY, PsbZ, Psb30/Ycf12, at least 3 peripheral proteins of the oxygen-evolving complex and a large number of cofactors. It forms dimeric complexes. The cofactor is The D1/D2 heterodimer binds P680, chlorophylls that are the primary electron donor of PSII, and subsequent electron acceptors. It shares a non-heme iron and each subunit binds pheophytin, quinone, additional chlorophylls, carotenoids and lipids. There is also a Cl(-1) ion associated with D1 and D2, which is required for oxygen evolution. The PSII complex binds additional chlorophylls, carotenoids and specific lipids..

It localises to the plastid. The protein resides in the chloroplast thylakoid membrane. The catalysed reaction is 2 a plastoquinone + 4 hnu + 2 H2O = 2 a plastoquinol + O2. Functionally, photosystem II (PSII) is a light-driven water:plastoquinone oxidoreductase that uses light energy to abstract electrons from H(2)O, generating O(2) and a proton gradient subsequently used for ATP formation. It consists of a core antenna complex that captures photons, and an electron transfer chain that converts photonic excitation into a charge separation. The D1/D2 (PsbA/PsbD) reaction center heterodimer binds P680, the primary electron donor of PSII as well as several subsequent electron acceptors. D2 is needed for assembly of a stable PSII complex. The protein is Photosystem II D2 protein of Barbarea verna (Land cress).